We begin with the raw amino-acid sequence, 255 residues long: Kallikrein-4 (255 aa).

A signal peptide spans 1–25; it reads MMVTARTPWGWFLGCLILEVTGASA. The propeptide occupies 26-31; the sequence is SSVSSR. Residues 32–253 enclose the Peptidase S1 domain; it reads IIQGQDCSPH…FTNWIQTIIQ (222 aa). H41 lines the Zn(2+) pocket. Cysteines 57 and 73 form a disulfide. Catalysis depends on H72, which acts as the Charge relay system. E92 is a Zn(2+) binding site. Residue D117 is the Charge relay system of the active site. 2 N-linked (GlcNAc...) asparagine glycosylation sites follow: N124 and N170. Intrachain disulfides connect C149–C214, C179–C193, and C204–C229. The Charge relay system role is filled by S208.

It belongs to the peptidase S1 family. Kallikrein subfamily. N-glycosylated. The N-glycan structures are of complex diantennary or triantennary type, which may be further modified with up to 2 sialic acid residues.

The protein resides in the secreted. Has a major role in enamel formation. Required during the maturation stage of tooth development for clearance of enamel proteins and normal structural patterning of the crystalline matrix. This is Kallikrein-4 from Mus musculus (Mouse).